A 914-amino-acid polypeptide reads, in one-letter code: DENN domain-containing protein 2C (914 aa).

Positions 46-98 are disordered; it reads FGVRYNCHQESPPHKRPTGEERNGALPRNTDVKSRDQSEDEGEGGECRGSHPS. The segment covering 56–68 has biased composition (basic and acidic residues); that stretch reads SPPHKRPTGEERN. S261 carries the post-translational modification Phosphoserine. Residues 411-446 are disordered; that stretch reads GKKRVKLQPYTGKEAPSSKGETSGNESDAEYLPKNR. The uDENN domain maps to 480–627; sequence ELFVVVSLQK…PFPAPGRTIT (148 aa). The region spanning 649 to 782 is the cDENN domain; sequence RLEHVDFECL…LQAALVQILE (134 aa). In terms of domain architecture, dDENN spans 784–874; the sequence is RDEVLAQEQQ…QDRELRQSGV (91 aa).

In terms of biological role, guanine nucleotide exchange factor (GEF) which may activate RAB9A and RAB9B. Promotes the exchange of GDP to GTP, converting inactive GDP-bound Rab proteins into their active GTP-bound form. The protein is DENN domain-containing protein 2C (Dennd2c) of Mus musculus (Mouse).